The sequence spans 234 residues: 2,3,4,5-tetrahydropyridine-2,6-dicarboxylate N-acetyltransferase (234 aa).

Belongs to the transferase hexapeptide repeat family. DapH subfamily.

The enzyme catalyses (S)-2,3,4,5-tetrahydrodipicolinate + acetyl-CoA + H2O = L-2-acetamido-6-oxoheptanedioate + CoA. It participates in amino-acid biosynthesis; L-lysine biosynthesis via DAP pathway; LL-2,6-diaminopimelate from (S)-tetrahydrodipicolinate (acetylase route): step 1/3. Catalyzes the transfer of an acetyl group from acetyl-CoA to tetrahydrodipicolinate. The sequence is that of 2,3,4,5-tetrahydropyridine-2,6-dicarboxylate N-acetyltransferase from Lacticaseibacillus casei (strain BL23) (Lactobacillus casei).